Here is a 152-residue protein sequence, read N- to C-terminus: Transcriptional regulator MraZ (152 aa).

SpoVT-AbrB domains follow at residues 5–52 (ATMV…PLPE) and 81–124 (ASEC…DEQT).

It belongs to the MraZ family. Forms oligomers.

Its subcellular location is the cytoplasm. The protein resides in the nucleoid. Its function is as follows. Negatively regulates its own expression and that of the subsequent genes in the proximal part of the division and cell wall (dcw) gene cluster. Acts by binding directly to DNA. May also regulate the expression of genes outside the dcw cluster. The protein is Transcriptional regulator MraZ of Yersinia pseudotuberculosis serotype O:1b (strain IP 31758).